We begin with the raw amino-acid sequence, 215 residues long: Phosphoribosylglycinamide formyltransferase (215 aa).

(6R)-10-formyltetrahydrofolate is bound by residues R74, 99-102 (MRIL), and N116. H118 acts as the Proton donor in catalysis.

Belongs to the GART family.

The catalysed reaction is N(1)-(5-phospho-beta-D-ribosyl)glycinamide + (6R)-10-formyltetrahydrofolate = N(2)-formyl-N(1)-(5-phospho-beta-D-ribosyl)glycinamide + (6S)-5,6,7,8-tetrahydrofolate + H(+). It participates in purine metabolism; IMP biosynthesis via de novo pathway; N(2)-formyl-N(1)-(5-phospho-D-ribosyl)glycinamide from N(1)-(5-phospho-D-ribosyl)glycinamide (10-formyl THF route): step 1/1. In terms of biological role, catalyzes the transfer of a formyl group from 10-formyltetrahydrofolate to 5-phospho-ribosyl-glycinamide (GAR), producing 5-phospho-ribosyl-N-formylglycinamide (FGAR) and tetrahydrofolate. The chain is Phosphoribosylglycinamide formyltransferase from Mycobacterium tuberculosis (strain CDC 1551 / Oshkosh).